Reading from the N-terminus, the 450-residue chain is Phosphoglucosamine mutase (450 aa).

Ser-102 acts as the Phosphoserine intermediate in catalysis. Positions 102, 244, 246, and 248 each coordinate Mg(2+). The residue at position 102 (Ser-102) is a Phosphoserine.

Belongs to the phosphohexose mutase family. It depends on Mg(2+) as a cofactor. Post-translationally, activated by phosphorylation.

The enzyme catalyses alpha-D-glucosamine 1-phosphate = D-glucosamine 6-phosphate. Catalyzes the conversion of glucosamine-6-phosphate to glucosamine-1-phosphate. The polypeptide is Phosphoglucosamine mutase (Nitratidesulfovibrio vulgaris (strain ATCC 29579 / DSM 644 / CCUG 34227 / NCIMB 8303 / VKM B-1760 / Hildenborough) (Desulfovibrio vulgaris)).